The primary structure comprises 522 residues: DNA damage-binding protein CMR1 (522 aa).

Residues 38–100 (AGVLEKSRAP…DNQLLKMGSP (63 aa)) form a disordered region. The span at 54–63 (TTNTRATKSA) shows a compositional bias: polar residues. Residue Ser-64 is modified to Phosphoserine. Phosphothreonine is present on Thr-69. Positions 75–84 (LRGESADDVK) are enriched in basic and acidic residues. WD repeat units lie at residues 183 to 224 (ITYE…LADS), 239 to 281 (LFTK…EVLT), 287 to 327 (DDSL…SEYN), 331 to 371 (LADK…KKPE), 388 to 427 (DSRLSVSAVSYSPTDGTLVCNGYDDTIRLFDVKSRDHLSA), 442 to 481 (GRWTSILKARFKPNKNVFAIANMKRAIDIYNSEGQQLAHL), and 482 to 521 (PTATVPAVISWHPLRNWIAGGNSSGKIFLFTDDSGTIKQE). Ser-224 bears the Phosphoserine mark.

The protein belongs to the WD repeat DDB2/WDR76 family.

It is found in the cytoplasm. The protein localises to the nucleus. DNA-binding protein that binds to both single- and double-stranded DNA. Binds preferentially to UV-damaged DNA in vitro. May be involved in DNA-metabolic processes. This is DNA damage-binding protein CMR1 from Saccharomyces cerevisiae (strain ATCC 204508 / S288c) (Baker's yeast).